An 805-amino-acid polypeptide reads, in one-letter code: Sucrose synthase 1 (805 aa).

The GT-B glycosyltransferase stretch occupies residues 274 to 751; the sequence is MVFNVVILSP…GLQRIYEKYT (478 aa).

The protein belongs to the glycosyltransferase 1 family. Plant sucrose synthase subfamily.

The catalysed reaction is an NDP-alpha-D-glucose + D-fructose = a ribonucleoside 5'-diphosphate + sucrose + H(+). Its function is as follows. Sucrose-cleaving enzyme that provides UDP-glucose and fructose for various metabolic pathways. This is Sucrose synthase 1 from Tulipa gesneriana (Garden tulip).